Reading from the N-terminus, the 105-residue chain is uncharacterized protein (105 aa).

The interval 1-27 (MSLKSWHPQSKTKRVGASEGNPQWGSG) is disordered.

This is an uncharacterized protein from Homo sapiens (Human).